The primary structure comprises 378 residues: Bifunctional enzyme IspD/IspF (378 aa).

The interval 1-222 is 2-C-methyl-D-erythritol 4-phosphate cytidylyltransferase; that stretch reads MTETVAIIVA…RLLSPTGAPR (222 aa). The interval 222–378 is 2-C-methyl-D-erythritol 2,4-cyclodiphosphate synthase; sequence RIGKGYDVHE…EAVALLMPKG (157 aa). Positions 228 and 230 each coordinate a divalent metal cation. 4-CDP-2-C-methyl-D-erythritol 2-phosphate is bound by residues 228 to 230 and 254 to 255; these read DVH and HS. Position 262 (His-262) interacts with a divalent metal cation. 4-CDP-2-C-methyl-D-erythritol 2-phosphate contacts are provided by residues 276 to 278, 352 to 355, Phe-359, and Arg-362; these read DIG and TTTE.

The protein in the N-terminal section; belongs to the IspD/TarI cytidylyltransferase family. IspD subfamily. It in the C-terminal section; belongs to the IspF family. The cofactor is a divalent metal cation.

It carries out the reaction 2-C-methyl-D-erythritol 4-phosphate + CTP + H(+) = 4-CDP-2-C-methyl-D-erythritol + diphosphate. It catalyses the reaction 4-CDP-2-C-methyl-D-erythritol 2-phosphate = 2-C-methyl-D-erythritol 2,4-cyclic diphosphate + CMP. It functions in the pathway isoprenoid biosynthesis; isopentenyl diphosphate biosynthesis via DXP pathway; isopentenyl diphosphate from 1-deoxy-D-xylulose 5-phosphate: step 2/6. The protein operates within isoprenoid biosynthesis; isopentenyl diphosphate biosynthesis via DXP pathway; isopentenyl diphosphate from 1-deoxy-D-xylulose 5-phosphate: step 4/6. Its function is as follows. Bifunctional enzyme that catalyzes the formation of 4-diphosphocytidyl-2-C-methyl-D-erythritol from CTP and 2-C-methyl-D-erythritol 4-phosphate (MEP) (IspD), and catalyzes the conversion of 4-diphosphocytidyl-2-C-methyl-D-erythritol 2-phosphate (CDP-ME2P) to 2-C-methyl-D-erythritol 2,4-cyclodiphosphate (ME-CPP) with a corresponding release of cytidine 5-monophosphate (CMP) (IspF). This Hyphomonas neptunium (strain ATCC 15444) protein is Bifunctional enzyme IspD/IspF.